A 65-amino-acid polypeptide reads, in one-letter code: Large ribosomal subunit protein bL35 (65 aa).

The protein belongs to the bacterial ribosomal protein bL35 family.

This is Large ribosomal subunit protein bL35 from Xanthomonas campestris pv. campestris (strain ATCC 33913 / DSM 3586 / NCPPB 528 / LMG 568 / P 25).